Reading from the N-terminus, the 120-residue chain is Large ribosomal subunit protein uL18 (120 aa).

The protein belongs to the universal ribosomal protein uL18 family. In terms of assembly, part of the 50S ribosomal subunit; part of the 5S rRNA/L5/L18/L25 subcomplex. Contacts the 5S and 23S rRNAs.

In terms of biological role, this is one of the proteins that bind and probably mediate the attachment of the 5S RNA into the large ribosomal subunit, where it forms part of the central protuberance. The protein is Large ribosomal subunit protein uL18 of Rhodopseudomonas palustris (strain BisB5).